The following is a 72-amino-acid chain: MAKDDVIEVDGKVIEALPNATFRVQLENGHIVLCHIAGKMRMHYIKILPGDMVKIELTPYSLDKGRITYRHK.

Residues 1–72 form the S1-like domain; sequence MAKDDVIEVD…DKGRITYRHK (72 aa).

It belongs to the IF-1 family. In terms of assembly, component of the 30S ribosomal translation pre-initiation complex which assembles on the 30S ribosome in the order IF-2 and IF-3, IF-1 and N-formylmethionyl-tRNA(fMet); mRNA recruitment can occur at any time during PIC assembly.

Its subcellular location is the cytoplasm. Functionally, one of the essential components for the initiation of protein synthesis. Stabilizes the binding of IF-2 and IF-3 on the 30S subunit to which N-formylmethionyl-tRNA(fMet) subsequently binds. Helps modulate mRNA selection, yielding the 30S pre-initiation complex (PIC). Upon addition of the 50S ribosomal subunit IF-1, IF-2 and IF-3 are released leaving the mature 70S translation initiation complex. The protein is Translation initiation factor IF-1 of Helicobacter hepaticus (strain ATCC 51449 / 3B1).